We begin with the raw amino-acid sequence, 475 residues long: BTB/POZ domain-containing protein 10 (475 aa).

Residues 1–143 (MAGRPHPYDG…SSQSSSDGSC (143 aa)) form a disordered region. Over residues 22-31 (LHSRPRKLYK) the composition is skewed to basic residues. Residues 57–80 (GHERSRDRRRSSDRSRDSSHERTE) are compositionally biased toward basic and acidic residues. Polar residues predominate over residues 81 to 94 (SQLTPCIRNVTSPT). The span at 97–107 (HHVEREKDHSS) shows a compositional bias: basic and acidic residues. The span at 108-142 (SRPSSPRPQKASPNGSISSAGNSSRNSSQSSSDGS) shows a compositional bias: low complexity. Residues 146-475 (AGEMVFVYEN…LDPDAQNPTL (330 aa)) form an interaction with AKT family members region. Residues 167–241 (ERVTLIVDNT…YKTGIIRCPD (75 aa)) enclose the BTB domain. A disordered region spans residues 456 to 475 (PIHPPSGNSDLDPDAQNPTL).

As to quaternary structure, interacts (via C-terminal 330-amino-acid region) with AKT1; AKT2 and AKT3. Interacts with PPP2CA and PPP1CA.

The protein localises to the nucleus. It is found in the cytoplasm. Plays a major role as an activator of AKT family members by inhibiting PPP2CA-mediated dephosphorylation, thereby keeping AKTs activated. Plays a role in preventing motor neuronal death and in accelerating the growth of pancreatic beta cells. This chain is BTB/POZ domain-containing protein 10 (BTBD10), found in Pongo abelii (Sumatran orangutan).